The sequence spans 187 residues: Protein GrpE (187 aa).

The disordered stretch occupies residues 1 to 31; the sequence is MEKKETKNDAEKNNKQDNKSTKSQKKENLNL.

It belongs to the GrpE family. Homodimer.

Its subcellular location is the cytoplasm. Functionally, participates actively in the response to hyperosmotic and heat shock by preventing the aggregation of stress-denatured proteins, in association with DnaK and GrpE. It is the nucleotide exchange factor for DnaK and may function as a thermosensor. Unfolded proteins bind initially to DnaJ; upon interaction with the DnaJ-bound protein, DnaK hydrolyzes its bound ATP, resulting in the formation of a stable complex. GrpE releases ADP from DnaK; ATP binding to DnaK triggers the release of the substrate protein, thus completing the reaction cycle. Several rounds of ATP-dependent interactions between DnaJ, DnaK and GrpE are required for fully efficient folding. The sequence is that of Protein GrpE from Borrelia garinii subsp. bavariensis (strain ATCC BAA-2496 / DSM 23469 / PBi) (Borreliella bavariensis).